A 141-amino-acid polypeptide reads, in one-letter code: uncharacterized protein (141 aa).

2 helical membrane passes run 41 to 61 and 95 to 115; these read LIMLLVAICSSLSGNTVNYLF and IIFLISFPFWGCFVSLFSGFF.

The protein localises to the cell membrane. This is an uncharacterized protein from Rickettsia prowazekii (strain Madrid E).